A 545-amino-acid chain; its full sequence is Bifunctional purine biosynthesis protein PurH (545 aa).

The region spanning 1–150 is the MGS-like domain; that stretch reads MTNTNRPIRR…KNHATVAIVT (150 aa).

This sequence belongs to the PurH family.

The catalysed reaction is (6R)-10-formyltetrahydrofolate + 5-amino-1-(5-phospho-beta-D-ribosyl)imidazole-4-carboxamide = 5-formamido-1-(5-phospho-D-ribosyl)imidazole-4-carboxamide + (6S)-5,6,7,8-tetrahydrofolate. It carries out the reaction IMP + H2O = 5-formamido-1-(5-phospho-D-ribosyl)imidazole-4-carboxamide. The protein operates within purine metabolism; IMP biosynthesis via de novo pathway; 5-formamido-1-(5-phospho-D-ribosyl)imidazole-4-carboxamide from 5-amino-1-(5-phospho-D-ribosyl)imidazole-4-carboxamide (10-formyl THF route): step 1/1. Its pathway is purine metabolism; IMP biosynthesis via de novo pathway; IMP from 5-formamido-1-(5-phospho-D-ribosyl)imidazole-4-carboxamide: step 1/1. In Bifidobacterium longum (strain NCC 2705), this protein is Bifunctional purine biosynthesis protein PurH.